The sequence spans 143 residues: Transcriptional regulator MraZ (143 aa).

SpoVT-AbrB domains lie at 5 to 47 and 76 to 119; these read EYDH…TLDE and AVEV…DRET.

It belongs to the MraZ family. As to quaternary structure, forms oligomers.

Its subcellular location is the cytoplasm. The protein localises to the nucleoid. This Staphylococcus aureus (strain Mu3 / ATCC 700698) protein is Transcriptional regulator MraZ.